The primary structure comprises 283 residues: Poly(3-hydroxyalkanoate) depolymerase (283 aa).

Positions 30 to 253 (PLLIFNGIGA…IDDGHLFLIT (224 aa)) constitute an AB hydrolase-1 domain. Ser-102 (charge relay system) is an active-site residue.

It belongs to the AB hydrolase superfamily. Lipase family.

Complements a mutant that does not degrade PHA; might be a lipase. This is Poly(3-hydroxyalkanoate) depolymerase from Ectopseudomonas oleovorans (Pseudomonas oleovorans).